The following is a 253-amino-acid chain: 5-oxoprolinase subunit A (253 aa).

The protein belongs to the LamB/PxpA family. Forms a complex composed of PxpA, PxpB and PxpC.

It catalyses the reaction 5-oxo-L-proline + ATP + 2 H2O = L-glutamate + ADP + phosphate + H(+). Its function is as follows. Catalyzes the cleavage of 5-oxoproline to form L-glutamate coupled to the hydrolysis of ATP to ADP and inorganic phosphate. This chain is 5-oxoprolinase subunit A, found in Bacillus anthracis (strain CDC 684 / NRRL 3495).